We begin with the raw amino-acid sequence, 172 residues long: AIG2-like protein C (172 aa).

Residue 13 to 18 (YGSLQE) participates in substrate binding. The active-site Proton acceptor is the E81.

This sequence belongs to the gamma-glutamylcyclotransferase family. As to expression, expressed in flowers, leaves, stems and roots.

Its function is as follows. Putative gamma-glutamylcyclotransferase. This chain is AIG2-like protein C, found in Arabidopsis thaliana (Mouse-ear cress).